The primary structure comprises 132 residues: Pro-MCH 1 (132 aa).

Positions 1–24 (MRDSVLSVIFALALFLECYTPSMA) are cleaved as a signal peptide. Cysteine 120 and cysteine 129 are joined by a disulfide.

The protein belongs to the MCH family. In terms of tissue distribution, pituitary gland. Produced in neurons of lateral basal hypothalamus which project both to the brain and to the neural lobe of the pituitary gland from where MCH is released.

In terms of biological role, plays a role in skin pigmentation by antagonizing the action of melanotropin alpha. Induces melanin concentration within the melanophores. May participate in the control of the hypothalamo-pituitary adrenal gland axis by inhibiting the release of ACTH. The chain is Pro-MCH 1 (mch1) from Oncorhynchus kisutch (Coho salmon).